A 248-amino-acid polypeptide reads, in one-letter code: UPF0651 protein YPL107W, mitochondrial (248 aa).

A mitochondrion-targeting transit peptide spans 1–26 (MIRNQGWSLLYRIYPVRRFTRYSRVD). In terms of domain architecture, Oxidoreductase-like spans 69–116 (KKIAGVQVPAKPQEPDNCCMSGCVNCVWEIYSEDLRDWKHRRKEAAEK).

Belongs to the UPF0651 family.

The protein localises to the mitochondrion. In Saccharomyces cerevisiae (strain ATCC 204508 / S288c) (Baker's yeast), this protein is UPF0651 protein YPL107W, mitochondrial.